Here is a 189-residue protein sequence, read N- to C-terminus: Glycerol-3-phosphate acyltransferase (189 aa).

Transmembrane regions (helical) follow at residues 1–21 (MVWL…AVLL), 50–70 (KLAI…VLVA), 72–92 (WLGL…IGHL), 111–131 (MLLG…LLTF), and 151–171 (LLAW…GLIV).

It belongs to the PlsY family. As to quaternary structure, probably interacts with PlsX.

It is found in the cell inner membrane. The catalysed reaction is an acyl phosphate + sn-glycerol 3-phosphate = a 1-acyl-sn-glycero-3-phosphate + phosphate. Its pathway is lipid metabolism; phospholipid metabolism. Functionally, catalyzes the transfer of an acyl group from acyl-phosphate (acyl-PO(4)) to glycerol-3-phosphate (G3P) to form lysophosphatidic acid (LPA). This enzyme utilizes acyl-phosphate as fatty acyl donor, but not acyl-CoA or acyl-ACP. In Pseudomonas aeruginosa (strain LESB58), this protein is Glycerol-3-phosphate acyltransferase.